The following is a 188-amino-acid chain: Archaemetzincin (188 aa).

His137 serves as a coordination point for Zn(2+). Residue Glu138 is the Proton acceptor of the active site. Zn(2+) contacts are provided by His141, His147, Cys148, Cys153, Cys172, and Cys175.

Belongs to the peptidase M54 family. Monomer. The cofactor is Zn(2+).

Probable zinc metalloprotease whose natural substrate is unknown. This is Archaemetzincin from Pyrococcus horikoshii (strain ATCC 700860 / DSM 12428 / JCM 9974 / NBRC 100139 / OT-3).